A 921-amino-acid polypeptide reads, in one-letter code: Isoleucine--tRNA ligase (921 aa).

The 'HIGH' region signature appears at Pro57 to His67. An L-isoleucyl-5'-AMP-binding site is contributed by Glu552. Positions Lys593–Ser597 match the 'KMSKS' region motif. Lys596 contributes to the ATP binding site. Residues Cys888, Cys891, Cys908, and Cys911 each contribute to the Zn(2+) site.

Belongs to the class-I aminoacyl-tRNA synthetase family. IleS type 1 subfamily. Monomer. Requires Zn(2+) as cofactor.

Its subcellular location is the cytoplasm. The catalysed reaction is tRNA(Ile) + L-isoleucine + ATP = L-isoleucyl-tRNA(Ile) + AMP + diphosphate. Catalyzes the attachment of isoleucine to tRNA(Ile). As IleRS can inadvertently accommodate and process structurally similar amino acids such as valine, to avoid such errors it has two additional distinct tRNA(Ile)-dependent editing activities. One activity is designated as 'pretransfer' editing and involves the hydrolysis of activated Val-AMP. The other activity is designated 'posttransfer' editing and involves deacylation of mischarged Val-tRNA(Ile). This chain is Isoleucine--tRNA ligase, found in Bacillus cereus (strain AH820).